A 484-amino-acid chain; its full sequence is Transcription factor MYB88 (484 aa).

Residues 1–20 are disordered; sequence MEETTKQNNMKKKKKILLHS. Positions 13 to 20 match the Nuclear localization signal motif; that stretch reads KKKILLHS. HTH myb-type domains follow at residues 25–76 and 77–131; these read KKER…YTYL and NSDF…KKRA. 2 consecutive DNA-binding regions (H-T-H motif) follow at residues 53–76 and 104–127; these read WAII…YTYL and WTEI…TTLC. 3 disordered regions span residues 215 to 241, 321 to 383, and 458 to 484; these read NATS…DKSN, RSSN…GGEL, and GVES…LDSL. The segment covering 232–241 has biased composition (basic and acidic residues); sequence KESDGEDKSN. A compositionally biased stretch (low complexity) spans 339 to 348; sequence SPASSEYSSG. A compositionally biased stretch (polar residues) spans 354–380; sequence TIMTHPSGDKTQQLMSDTQTTSHQQNG. The segment covering 463–476 has biased composition (pro residues); that stretch reads SPYPSANPSQPPPC.

Interacts with RBR1. As to expression, expressed at low levels in all organs including roots, leaves, hypocotyls stems, flowers, siliques and buds.

The protein resides in the nucleus. Its function is as follows. Transcription factor that binds to DNA in promoters cis-regulatory element 5'-GGCGCGC-3' of cell cycle genes, including cyclins, cyclin-dependent kinases (CDKs), and components of the pre-replication complex. Binds to DNA in promoters cis-regulatory element 5'-AGCCG-3' of auxin regulated genes (e.g. PIN3 and PIN7). Together with FAMA and MYB124, ensures that stomata contain just two guard cells (GCs) by enforcing a single symmetric precursor cell division before stomatal maturity. Represses the expression of the mitosis-inducing factors CDKB1-1 and CDKA-1, specifically required for the last guard mother cells (GMC) symmetric divisions in the stomatal pathway. Represses CYCA2-3 in newly formed guard cells. Together with MYB88, regulates stomata spacing by restricting divisions late in the stomatal cell lineage thus limiting the number of GMC divisions. In collaboration with CDKB1-1 and CDKB1-2, restrict the G1/S transition and chloroplast and nuclear number during stomatal formation, and normally maintain fate and developmental progression throughout the stomatal cell lineage. Involved in sensing and/or transducing abiotic stress (e.g. drought and salt), probably via the positive regulation of NAC019. Regulates female reproduction being required for entry into megasporogenesis, probably via the regulation of cell cycle genes. Plays a minor role in lateral roots (LRs) initiation. Involved complementarily in establishing the gravitropic set-point angles of lateral roots by regulating the transcription of PIN3 and PIN7 in gravity-sensing cells of primary and lateral roots. This Arabidopsis thaliana (Mouse-ear cress) protein is Transcription factor MYB88.